Consider the following 204-residue polypeptide: MTAAFASDQRLENGAEQLESLRRQMALLSEKVSGGPSRSGDLVPAGPVSLPPGTVGVLSGARSLLLSMVASVTAAGGNAAIVGQPDIGLLAAVEMGADLSRLAVIPDPGTDPVEVAAVLIDGMDLVVLGLGGRRVTRARARAVVARARQKGCTLLVTDGDWQGVSTRLAARVCGYEITPALRGVPTPGLGRISGVRLQINGRGR.

The helical transmembrane segment at 63–83 (SLLLSMVASVTAAGGNAAIVG) threads the bilayer.

The protein resides in the membrane. This is an uncharacterized protein from Mycobacterium tuberculosis (strain ATCC 25618 / H37Rv).